A 315-amino-acid polypeptide reads, in one-letter code: Thioredoxin reductase (315 aa).

Residue 45 to 52 (EGNTPGGK) participates in FAD binding. A disulfide bond links Cys145 and Cys148. Residue 288 to 297 (DCRSKSFRQI) coordinates FAD.

The protein belongs to the class-II pyridine nucleotide-disulfide oxidoreductase family. In terms of assembly, homodimer. The cofactor is FAD.

The protein resides in the cytoplasm. It carries out the reaction [thioredoxin]-dithiol + NADP(+) = [thioredoxin]-disulfide + NADPH + H(+). The protein is Thioredoxin reductase (trxB) of Mycoplasma genitalium (strain ATCC 33530 / DSM 19775 / NCTC 10195 / G37) (Mycoplasmoides genitalium).